A 180-amino-acid chain; its full sequence is Large ribosomal subunit protein uL5 (180 aa).

Belongs to the universal ribosomal protein uL5 family. As to quaternary structure, part of the 50S ribosomal subunit; part of the 5S rRNA/L5/L18/L25 subcomplex. Contacts the 5S rRNA and the P site tRNA. Forms a bridge to the 30S subunit in the 70S ribosome.

This is one of the proteins that bind and probably mediate the attachment of the 5S RNA into the large ribosomal subunit, where it forms part of the central protuberance. In the 70S ribosome it contacts protein S13 of the 30S subunit (bridge B1b), connecting the 2 subunits; this bridge is implicated in subunit movement. Contacts the P site tRNA; the 5S rRNA and some of its associated proteins might help stabilize positioning of ribosome-bound tRNAs. This chain is Large ribosomal subunit protein uL5, found in Limosilactobacillus reuteri (strain DSM 20016) (Lactobacillus reuteri).